The primary structure comprises 117 residues: Transcription elongation factor SPT4-B (117 aa).

Positions 1 to 40 (MALETVPKDLRHLRACLLCSLVKTIDQFEYDGCDNCDAYL) are interaction with SUPT5H. The segment at 16–36 (CLLCSLVKTIDQFEYDGCDNC) adopts a C4-type zinc-finger fold.

It belongs to the SPT4 family. In terms of assembly, interacts with SUPT5H to form DSIF. DSIF interacts with the positive transcription elongation factor b complex (P-TEFb complex), which is composed of CDK9 and cyclin-T (CCNT1 or CCNT2). DSIF interacts with RNA polymerase II, and this interaction is reduced by phosphorylation of the C-terminal domain (CTD) of POLR2A by P-TEFb. DSIF also interacts with the NELF complex, which is composed of WHSC2/NELFA, COBRA1/NELFB, TH1L/NELFD and RDBP/NELFE, and this interaction occurs following prior binding of DSIF to RNA polymerase II. DSIF also interacts with HRMT1L2/PRMT1, HTATSF1/TATSF1, RNGTT/CAP1A, SKB1/PRMT5, SUPT6H, and can interact with PIN1. In terms of processing, ubiquitinated by Ubr5 when not assembled in the DSIF complex, leading to its degradation: Ubr5 recognizes and binds a degron that is not accessible when Supt4h1b is part of the DSIF complex. Expressed in brain, heart and liver.

The protein resides in the nucleus. In terms of biological role, component of the DRB sensitivity-inducing factor complex (DSIF complex), which regulates mRNA processing and transcription elongation by RNA polymerase II. DSIF positively regulates mRNA capping by stimulating the mRNA guanylyltransferase activity of RNGTT/CAP1A. DSIF also acts cooperatively with the negative elongation factor complex (NELF complex) to enhance transcriptional pausing at sites proximal to the promoter. Transcriptional pausing may facilitate the assembly of an elongation competent RNA polymerase II complex. DSIF and NELF promote pausing by inhibition of the transcription elongation factor TFIIS/S-II. TFIIS/S-II binds to RNA polymerase II at transcription pause sites and stimulates the weak intrinsic nuclease activity of the enzyme. Cleavage of blocked transcripts by RNA polymerase II promotes the resumption of transcription from the new 3' terminus and may allow repeated attempts at transcription through natural pause sites. This is Transcription elongation factor SPT4-B (Supt4h1b) from Mus musculus (Mouse).